Reading from the N-terminus, the 366-residue chain is Glutamate 5-kinase (366 aa).

Lys-17 is a binding site for ATP. Residues Ser-57, Asp-144, and Asn-156 each coordinate substrate. Residues 176-177 (SD) and 216-222 (TGGMASK) contribute to the ATP site. Residues 278–352 (RGALVLDDGA…GRSTTELPDT (75 aa)) enclose the PUA domain.

It belongs to the glutamate 5-kinase family.

The protein resides in the cytoplasm. It catalyses the reaction L-glutamate + ATP = L-glutamyl 5-phosphate + ADP. It participates in amino-acid biosynthesis; L-proline biosynthesis; L-glutamate 5-semialdehyde from L-glutamate: step 1/2. In terms of biological role, catalyzes the transfer of a phosphate group to glutamate to form L-glutamate 5-phosphate. The chain is Glutamate 5-kinase from Nocardia farcinica (strain IFM 10152).